Reading from the N-terminus, the 189-residue chain is dCTP deaminase (189 aa).

DCTP contacts are provided by residues 112–117 (KSTYAR), 136–138 (TLE), Gln-157, Tyr-171, and Gln-181. The active-site Proton donor/acceptor is Glu-138.

This sequence belongs to the dCTP deaminase family. In terms of assembly, homotrimer.

It catalyses the reaction dCTP + H2O + H(+) = dUTP + NH4(+). The protein operates within pyrimidine metabolism; dUMP biosynthesis; dUMP from dCTP (dUTP route): step 1/2. Catalyzes the deamination of dCTP to dUTP. This chain is dCTP deaminase, found in Burkholderia orbicola (strain MC0-3).